The following is a 283-amino-acid chain: NAD kinase (283 aa).

Residue Asp-67 is the Proton acceptor of the active site. NAD(+) is bound by residues 67 to 68, 141 to 142, Arg-152, Asp-171, 182 to 187, and Gln-241; these read DG, ND, and TAYSLS.

Belongs to the NAD kinase family. A divalent metal cation is required as a cofactor.

The protein resides in the cytoplasm. The catalysed reaction is NAD(+) + ATP = ADP + NADP(+) + H(+). In terms of biological role, involved in the regulation of the intracellular balance of NAD and NADP, and is a key enzyme in the biosynthesis of NADP. Catalyzes specifically the phosphorylation on 2'-hydroxyl of the adenosine moiety of NAD to yield NADP. The chain is NAD kinase from Heliobacterium modesticaldum (strain ATCC 51547 / Ice1).